The chain runs to 301 residues: Securin (301 aa).

Disordered stretches follow at residues Met-1–Leu-55, Asp-82–Leu-120, and Ala-218–His-284. Positions Arg-33–Leu-36 match the D-box 1 motif. Positions Ser-38–Val-50 are enriched in polar residues. The D-box 2 motif lies at Arg-52–Leu-55. Polar residues-rich tracts occupy residues Glu-88–Ala-98, Pro-110–Pro-119, and Val-231–Tyr-245. 2 repeats span residues Ala-250 to Ser-260 and Ala-270 to Ser-280.

This sequence belongs to the securin family. As to quaternary structure, interacts with the caspase-like cut1, and prevents its protease activity probably by covering its active site. In terms of processing, ubiquitinated by the anaphase promoting complex (APC) at the onset of anaphase, conducting to its degradation.

It is found in the cytoplasm. The protein resides in the nucleus. Its function is as follows. Regulatory protein, which plays a central role in chromosome stability. Probably acts by blocking the action of key proteins. During the mitosis, it blocks separase/cut1 function, preventing the proteolysis of the cohesin complex and the subsequent segregation of the chromosomes. At the onset of anaphase, it is ubiquitinated, conducting to its destruction and to the liberation of cut1. This is Securin (cut2) from Schizosaccharomyces pombe (strain 972 / ATCC 24843) (Fission yeast).